Reading from the N-terminus, the 93-residue chain is Cell division protein CrgA (93 aa).

2 consecutive transmembrane segments (helical) span residues 31–51 (VWFVTLFVGLMLIGLVWLMVF) and 70–90 (LGPWNYAIAFAFMITGLLLTM).

Belongs to the CrgA family.

It localises to the cell membrane. Its function is as follows. Involved in cell division. The chain is Cell division protein CrgA from Mycobacterium leprae (strain Br4923).